The primary structure comprises 458 residues: Exodeoxyribonuclease 7 large subunit (458 aa).

This sequence belongs to the XseA family. As to quaternary structure, heterooligomer composed of large and small subunits.

It is found in the cytoplasm. It carries out the reaction Exonucleolytic cleavage in either 5'- to 3'- or 3'- to 5'-direction to yield nucleoside 5'-phosphates.. Its function is as follows. Bidirectionally degrades single-stranded DNA into large acid-insoluble oligonucleotides, which are then degraded further into small acid-soluble oligonucleotides. The chain is Exodeoxyribonuclease 7 large subunit from Yersinia pseudotuberculosis serotype O:1b (strain IP 31758).